The chain runs to 318 residues: Aspartate carbamoyltransferase catalytic subunit (318 aa).

Residues arginine 59 and threonine 60 each coordinate carbamoyl phosphate. An L-aspartate-binding site is contributed by lysine 87. Positions 109, 137, and 140 each coordinate carbamoyl phosphate. L-aspartate is bound by residues arginine 170 and arginine 224. Positions 265 and 266 each coordinate carbamoyl phosphate.

This sequence belongs to the aspartate/ornithine carbamoyltransferase superfamily. ATCase family. Heterododecamer (2C3:3R2) of six catalytic PyrB chains organized as two trimers (C3), and six regulatory PyrI chains organized as three dimers (R2).

The enzyme catalyses carbamoyl phosphate + L-aspartate = N-carbamoyl-L-aspartate + phosphate + H(+). It functions in the pathway pyrimidine metabolism; UMP biosynthesis via de novo pathway; (S)-dihydroorotate from bicarbonate: step 2/3. Catalyzes the condensation of carbamoyl phosphate and aspartate to form carbamoyl aspartate and inorganic phosphate, the committed step in the de novo pyrimidine nucleotide biosynthesis pathway. The chain is Aspartate carbamoyltransferase catalytic subunit from Rhizobium etli (strain ATCC 51251 / DSM 11541 / JCM 21823 / NBRC 15573 / CFN 42).